Consider the following 120-residue polypeptide: Aspartate 1-decarboxylase (120 aa).

Ser-25 functions as the Schiff-base intermediate with substrate; via pyruvic acid in the catalytic mechanism. Ser-25 carries the post-translational modification Pyruvic acid (Ser). Substrate is bound at residue Thr-57. Catalysis depends on Tyr-58, which acts as the Proton donor. 73–75 (GAA) serves as a coordination point for substrate.

The protein belongs to the PanD family. In terms of assembly, heterooctamer of four alpha and four beta subunits. Pyruvate is required as a cofactor. Is synthesized initially as an inactive proenzyme, which is activated by self-cleavage at a specific serine bond to produce a beta-subunit with a hydroxyl group at its C-terminus and an alpha-subunit with a pyruvoyl group at its N-terminus.

The protein resides in the cytoplasm. The enzyme catalyses L-aspartate + H(+) = beta-alanine + CO2. The protein operates within cofactor biosynthesis; (R)-pantothenate biosynthesis; beta-alanine from L-aspartate: step 1/1. Catalyzes the pyruvoyl-dependent decarboxylation of aspartate to produce beta-alanine. The protein is Aspartate 1-decarboxylase of Deinococcus deserti (strain DSM 17065 / CIP 109153 / LMG 22923 / VCD115).